Consider the following 581-residue polypeptide: MGMKFQKILVLAGIVIGFLSIIVVLAGTLLKNSVPNVLAPVERHFAFDYVIVGGGTGGSTLTSLLAKNSNGSVLLIEAGGQFGLLSRIPLLTTFQQKGINDWSFLSVPQKHSSRGLIERRQCLPRGKGLGGSANLNYMLHFDGHGPDFDSWRDHHNLSDWSWAQMRSFMAAAKPKNPDMLEIPRRYSKLTEALEEAQAQFAYKDWIFRRSLYNIRNGLRHSVVQQFLNPVIHHSNLRLLPDALVKRIQLAPSPFLQATSILVGIKDEENREKEFSIELLMASGIGDVSALKKLGIPAQHSLPLVGHNLHDHFNLPLFVSMGVTGPTLNQNTLLNPMTLINYLSSGSGPLGNFGVLGNVVSYGGLGAPPYGITFFGAGAIDESALMSISNFKGPAFRALFPRYYNSSQEGFVVISSCLQPKSRGSVGLLNRHMRRNPLIDPNYLSSEEDVACTISAIRSAVELVNSTAFAALHPRIHWPRVQECSNFGPFERDFFDNRPSDQYLECLMRHVGLGSHHPGGTCALGSVVDSQLRLKGVSNVRVVDASVLPRPISGNPNSVVVAIALRAASWILKSELQAGDSK.

Positions Met-1–Ala-26 are cleaved as a signal peptide. Asp-48–Glu-77 serves as a coordination point for FAD. Residues Asn-70, Asn-156, Asn-404, and Asn-464 are each glycosylated (N-linked (GlcNAc...) asparagine). His-516 functions as the Proton acceptor in the catalytic mechanism.

It belongs to the GMC oxidoreductase family. FAD serves as cofactor.

It localises to the secreted. Oxidoreductase involved in biosynthesis of 3-hydroxyretinal, a chromophore for rhodopsin Rh1. Not responsible for the initial hydroxylation of the retinal ring but rather acts in a subsequent step in chromophore production. May catalyze the conversion of (3R)-3-hydroxyretinol to the 3S enantiomer. In Drosophila melanogaster (Fruit fly), this protein is Neither inactivation nor afterpotential protein G (ninaG).